The following is a 421-amino-acid chain: Acetate kinase (421 aa).

Asn-7 lines the Mg(2+) pocket. Lys-14 is an ATP binding site. Arg-91 is a substrate binding site. Asp-148 (proton donor/acceptor) is an active-site residue. Residues 208-212 (HIGNG) and 283-285 (DRR) contribute to the ATP site. A Mg(2+)-binding site is contributed by Glu-387.

Belongs to the acetokinase family. In terms of assembly, homodimer. The cofactor is Mg(2+). It depends on Mn(2+) as a cofactor.

It is found in the cytoplasm. The enzyme catalyses acetate + ATP = acetyl phosphate + ADP. It functions in the pathway metabolic intermediate biosynthesis; acetyl-CoA biosynthesis; acetyl-CoA from acetate: step 1/2. In terms of biological role, catalyzes the formation of acetyl phosphate from acetate and ATP. Can also catalyze the reverse reaction. This chain is Acetate kinase, found in Trichlorobacter lovleyi (strain ATCC BAA-1151 / DSM 17278 / SZ) (Geobacter lovleyi).